The sequence spans 304 residues: Methionyl-tRNA formyltransferase (304 aa).

110-113 (SLLP) serves as a coordination point for (6S)-5,6,7,8-tetrahydrofolate.

It belongs to the Fmt family.

It carries out the reaction L-methionyl-tRNA(fMet) + (6R)-10-formyltetrahydrofolate = N-formyl-L-methionyl-tRNA(fMet) + (6S)-5,6,7,8-tetrahydrofolate + H(+). Functionally, attaches a formyl group to the free amino group of methionyl-tRNA(fMet). The formyl group appears to play a dual role in the initiator identity of N-formylmethionyl-tRNA by promoting its recognition by IF2 and preventing the misappropriation of this tRNA by the elongation apparatus. The chain is Methionyl-tRNA formyltransferase from Gluconobacter oxydans (strain 621H) (Gluconobacter suboxydans).